Here is a 103-residue protein sequence, read N- to C-terminus: MAKKSLIQREKKRQKLEQKYHLIRQSLKKKIRSKVSSLSLSEKTKMREKLQSLPRNSAPTRLHRRCFLTGRPRANYRDFGLSGHVLREMVYECLLPGATRSSW.

The protein belongs to the universal ribosomal protein uS14 family. As to quaternary structure, part of the 30S ribosomal subunit.

The protein localises to the plastid. It is found in the chloroplast. Binds 16S rRNA, required for the assembly of 30S particles. This is Small ribosomal subunit protein uS14c from Lolium perenne (Perennial ryegrass).